Consider the following 187-residue polypeptide: Sodium/potassium ATPase inhibitor SPAI-2 (187 aa).

An N-terminal signal peptide occupies residues 1–21 (MRSRSFLVLVAVFLICETLVA). A Pyrrolidone carboxylic acid modification is found at Gln-22. Positions 22 to 126 (QRLDRIRGPK…NAQLPDKVQD (105 aa)) are excised as a propeptide. The disordered stretch occupies residues 28 to 98 (RGPKGQGQDP…QDPVKAELPD (71 aa)). Tandem repeats lie at residues 34–39 (GQDPVE), 40–45 (GQDQDE), 46–51 (GPGPVK), 58–63 (GQDPVK), 64–69 (GQDPVK), 70–75 (GQDPVK), 76–81 (GQDPVK), 82–87 (GQDLVK), 88–93 (SQDPVK), 100–105 (GQDVVK), 106–111 (GHEPVE), 112–117 (GQDPVN), 118–123 (AQLPDK), and 124–129 (VQDPVK). Residues 34–129 (GQDPVEGQDQ…LPDKVQDPVK (96 aa)) are 14 X 6 AA approximate tandem repeats. An SVP-1 clotting 1 repeat occupies 64–85 (GQDPVKGQDPVKGQDPVKGQDL). In terms of domain architecture, WAP spans 139-187 (LLSKRGHCPRILFRCPLSNPSNKCWRDYDCPGVKKCCEGFCGKDCLYPK). Cystine bridges form between Cys-146–Cys-175, Cys-153–Cys-179, Cys-162–Cys-174, and Cys-168–Cys-183.

In terms of processing, the short form (AA 127-187) may be an artifact due to the strongly acidic conditions of the duodenum. The pro-SPAI form may be the native form. In terms of tissue distribution, small intestine &gt; large intestine. The plasma contains the pro-SPAI form circulating.

Its function is as follows. Inhibits Na(+),K(+) ATPase by the competitive mode against Na(+). The protein is Sodium/potassium ATPase inhibitor SPAI-2 of Sus scrofa (Pig).